Reading from the N-terminus, the 560-residue chain is DNA ligase B (560 aa).

Residue K124 is the N6-AMP-lysine intermediate of the active site.

The protein belongs to the NAD-dependent DNA ligase family. LigB subfamily.

The catalysed reaction is NAD(+) + (deoxyribonucleotide)n-3'-hydroxyl + 5'-phospho-(deoxyribonucleotide)m = (deoxyribonucleotide)n+m + AMP + beta-nicotinamide D-nucleotide.. Its function is as follows. Catalyzes the formation of phosphodiester linkages between 5'-phosphoryl and 3'-hydroxyl groups in double-stranded DNA using NAD as a coenzyme and as the energy source for the reaction. The sequence is that of DNA ligase B from Escherichia coli O139:H28 (strain E24377A / ETEC).